The following is a 532-amino-acid chain: Alkaline phosphatase (532 aa).

Residues 1-20 (MASERDPLLPVHGEGPESPS) form a disordered region. A helical; Signal-anchor for type II membrane protein membrane pass occupies residues 27–47 (WIKHGILLILVLSTVIFFYFF). Asp68 contacts Mg(2+). Asp68 lines the Zn(2+) pocket. Ser115 serves as the catalytic Phosphoserine intermediate. Residues Asp166, Thr168, and Glu306 each contribute to the Mg(2+) site. Asp311, His315, Asp352, His353, and His456 together coordinate Zn(2+).

This sequence belongs to the alkaline phosphatase family. The cofactor is Mg(2+). Zn(2+) is required as a cofactor.

It is found in the membrane. The enzyme catalyses a phosphate monoester + H2O = an alcohol + phosphate. The chain is Alkaline phosphatase from Schizosaccharomyces pombe (strain 972 / ATCC 24843) (Fission yeast).